Reading from the N-terminus, the 260-residue chain is Thiazole synthase (260 aa).

Lys-96 (schiff-base intermediate with DXP) is an active-site residue. 1-deoxy-D-xylulose 5-phosphate contacts are provided by residues Gly-157, 184 to 185, and 206 to 207; these read AG and NT.

Belongs to the ThiG family. In terms of assembly, homotetramer. Forms heterodimers with either ThiH or ThiS.

Its subcellular location is the cytoplasm. The enzyme catalyses [ThiS sulfur-carrier protein]-C-terminal-Gly-aminoethanethioate + 2-iminoacetate + 1-deoxy-D-xylulose 5-phosphate = [ThiS sulfur-carrier protein]-C-terminal Gly-Gly + 2-[(2R,5Z)-2-carboxy-4-methylthiazol-5(2H)-ylidene]ethyl phosphate + 2 H2O + H(+). It participates in cofactor biosynthesis; thiamine diphosphate biosynthesis. Its function is as follows. Catalyzes the rearrangement of 1-deoxy-D-xylulose 5-phosphate (DXP) to produce the thiazole phosphate moiety of thiamine. Sulfur is provided by the thiocarboxylate moiety of the carrier protein ThiS. In vitro, sulfur can be provided by H(2)S. The polypeptide is Thiazole synthase (Rhodopseudomonas palustris (strain BisA53)).